The following is a 683-amino-acid chain: UvrABC system protein B (683 aa).

The tract at residues 1-29 is disordered; sequence MTDTGPLQPDRPDLDRPLSVDAPFEPAGD. Residues 39 to 417 form the Helicase ATP-binding domain; sequence AGFESGAEKQ…PGDYERDHSE (379 aa). Position 52 to 59 (52 to 59) interacts with ATP; sequence GVTGSGKT. Residues 105–128 carry the Beta-hairpin motif; the sequence is YYDYYQPEAYVEQTDTYIDKDMSI. The Helicase C-terminal domain occupies 442 to 604; that stretch reads QVEDLIERIQ…EPRTIEKPVS (163 aa). Basic and acidic residues predominate over residues 587–603; that stretch reads EFNAEHGHEPRTIEKPV. A disordered region spans residues 587–620; that stretch reads EFNAEHGHEPRTIEKPVSETNLPGSSTDTDGVAD. A compositionally biased stretch (polar residues) spans 604-615; sequence SETNLPGSSTDT. The UVR domain maps to 630 to 665; sequence EQLIERLETRMQEAADNLEFELAADIRDRIRELRET.

Belongs to the UvrB family. As to quaternary structure, forms a heterotetramer with UvrA during the search for lesions. Interacts with UvrC in an incision complex.

The protein localises to the cytoplasm. Its function is as follows. The UvrABC repair system catalyzes the recognition and processing of DNA lesions. A damage recognition complex composed of 2 UvrA and 2 UvrB subunits scans DNA for abnormalities. Upon binding of the UvrA(2)B(2) complex to a putative damaged site, the DNA wraps around one UvrB monomer. DNA wrap is dependent on ATP binding by UvrB and probably causes local melting of the DNA helix, facilitating insertion of UvrB beta-hairpin between the DNA strands. Then UvrB probes one DNA strand for the presence of a lesion. If a lesion is found the UvrA subunits dissociate and the UvrB-DNA preincision complex is formed. This complex is subsequently bound by UvrC and the second UvrB is released. If no lesion is found, the DNA wraps around the other UvrB subunit that will check the other stand for damage. In Natronomonas pharaonis (strain ATCC 35678 / DSM 2160 / CIP 103997 / JCM 8858 / NBRC 14720 / NCIMB 2260 / Gabara) (Halobacterium pharaonis), this protein is UvrABC system protein B.